A 271-amino-acid chain; its full sequence is 2,3,4,5-tetrahydropyridine-2,6-dicarboxylate N-succinyltransferase (271 aa).

Substrate is bound by residues Arg103 and Asp140.

This sequence belongs to the transferase hexapeptide repeat family. Homotrimer.

It is found in the cytoplasm. It catalyses the reaction (S)-2,3,4,5-tetrahydrodipicolinate + succinyl-CoA + H2O = (S)-2-succinylamino-6-oxoheptanedioate + CoA. It participates in amino-acid biosynthesis; L-lysine biosynthesis via DAP pathway; LL-2,6-diaminopimelate from (S)-tetrahydrodipicolinate (succinylase route): step 1/3. The sequence is that of 2,3,4,5-tetrahydropyridine-2,6-dicarboxylate N-succinyltransferase from Methylococcus capsulatus (strain ATCC 33009 / NCIMB 11132 / Bath).